The primary structure comprises 762 residues: 5-methyltetrahydropteroyltriglutamate--homocysteine methyltransferase (762 aa).

5-methyltetrahydropteroyltri-L-glutamate-binding positions include R17–K20 and K111. L-homocysteine-binding positions include I435–S437 and E488. L-methionine is bound by residues I435–S437 and E488. 5-methyltetrahydropteroyltri-L-glutamate contacts are provided by residues R519–C520 and W565. D603 lines the L-homocysteine pocket. D603 is an L-methionine binding site. Position 609 (E609) interacts with 5-methyltetrahydropteroyltri-L-glutamate. Positions 645, 647, and 669 each coordinate Zn(2+). H698 functions as the Proton donor in the catalytic mechanism. Position 730 (C730) interacts with Zn(2+).

It belongs to the vitamin-B12 independent methionine synthase family. It depends on Zn(2+) as a cofactor.

It catalyses the reaction 5-methyltetrahydropteroyltri-L-glutamate + L-homocysteine = tetrahydropteroyltri-L-glutamate + L-methionine. It participates in amino-acid biosynthesis; L-methionine biosynthesis via de novo pathway; L-methionine from L-homocysteine (MetE route): step 1/1. Functionally, catalyzes the transfer of a methyl group from 5-methyltetrahydrofolate to homocysteine resulting in methionine formation. The protein is 5-methyltetrahydropteroyltriglutamate--homocysteine methyltransferase of Bacillus cereus (strain G9842).